The following is a 500-amino-acid chain: L-arabinose isomerase (500 aa).

Mn(2+)-binding residues include Glu-306, Glu-333, His-350, and His-450.

This sequence belongs to the arabinose isomerase family. Homohexamer. Requires Mn(2+) as cofactor.

It catalyses the reaction beta-L-arabinopyranose = L-ribulose. It functions in the pathway carbohydrate degradation; L-arabinose degradation via L-ribulose; D-xylulose 5-phosphate from L-arabinose (bacterial route): step 1/3. In terms of biological role, catalyzes the conversion of L-arabinose to L-ribulose. The protein is L-arabinose isomerase of Escherichia coli O6:H1 (strain CFT073 / ATCC 700928 / UPEC).